The sequence spans 561 residues: Asparagine synthetase [glutamine-hydrolyzing] (561 aa).

Cys-2 serves as the catalytic For GATase activity. One can recognise a Glutamine amidotransferase type-2 domain in the interval 2-191 (CGIWALFGSD…PGHYEVLDLK (190 aa)). L-glutamine is bound by residues 49-53 (RLAVV), 75-77 (NGE), and Asp-97. Residues 213–536 (HALYDSVEKL…PGRADWLTHY (324 aa)) form the Asparagine synthetase domain. ATP-binding positions include Leu-256, Ile-288, and 363 to 364 (SG). Position 385 is an N6-acetyllysine (Lys-385). At Thr-545 the chain carries Phosphothreonine. Residue Ser-557 is modified to Phosphoserine.

The enzyme catalyses L-aspartate + L-glutamine + ATP + H2O = L-asparagine + L-glutamate + AMP + diphosphate + H(+). The protein operates within amino-acid biosynthesis; L-asparagine biosynthesis; L-asparagine from L-aspartate (L-Gln route): step 1/1. This is Asparagine synthetase [glutamine-hydrolyzing] (ASNS) from Mesocricetus auratus (Golden hamster).